Consider the following 101-residue polypeptide: Small ribosomal subunit protein uS14 (101 aa).

This sequence belongs to the universal ribosomal protein uS14 family. Part of the 30S ribosomal subunit. Contacts proteins S3 and S10.

Binds 16S rRNA, required for the assembly of 30S particles and may also be responsible for determining the conformation of the 16S rRNA at the A site. This Methylococcus capsulatus (strain ATCC 33009 / NCIMB 11132 / Bath) protein is Small ribosomal subunit protein uS14.